Here is a 131-residue protein sequence, read N- to C-terminus: C-C motif chemokine 21 (131 aa).

Positions 1 to 23 (MAQSLALSLLILVLAFGIPGTQG) are cleaved as a signal peptide. Cystine bridges form between Cys-31–Cys-57, Cys-32–Cys-75, and Cys-103–Cys-119. Residues 89-131 (HLDKTPTPRKPVQGCRKDRGVPKNGKKGKGCKRTEQSQTPKGP) form a disordered region.

This sequence belongs to the intercrine beta (chemokine CC) family. In terms of assembly, monomer. Binds to CCR7. Interacts with PDPN; relocalizes PDPN to the basolateral membrane. Interacts with TNFAIP6 (via Link domain). Interacts with GPR174.

The protein localises to the secreted. Inhibits hemopoiesis and stimulates chemotaxis. Chemotactic in vitro for thymocytes and activated T-cells, but not for B-cells, macrophages, or neutrophils. Shows preferential activity towards naive T-cells. May play a role in mediating homing of lymphocytes to secondary lymphoid organs. Binds to atypical chemokine receptor ACKR4 and mediates the recruitment of beta-arrestin (ARRB1/2) to ACKR4. This Macaca mulatta (Rhesus macaque) protein is C-C motif chemokine 21 (CCL21).